Here is a 280-residue protein sequence, read N- to C-terminus: 3-dehydroshikimate dehydratase (280 aa).

Tyr70, Arg102, and Glu142 together coordinate substrate. Residue Glu142 participates in Mn(2+) binding. His144 serves as the catalytic Proton acceptor. Residues Asp172 and His175 each coordinate substrate. Position 172 (Asp172) interacts with Mn(2+). His198 is a Mn(2+) binding site. Residues Tyr217 and Glu253 each contribute to the substrate site. Position 253 (Glu253) interacts with Mn(2+).

As to quaternary structure, homodimer. The cofactor is Mn(2+).

It catalyses the reaction 3-dehydroshikimate = 3,4-dihydroxybenzoate + H2O. The protein operates within aromatic compound metabolism; 3,4-dihydroxybenzoate biosynthesis; 3,4-dihydroxybenzoate from 3-dehydroquinate: step 2/2. Its pathway is siderophore biosynthesis; petrobactin biosynthesis. Functionally, involved in the biosynthesis of petrobactin, a catecholate siderophore that functions in both iron acquisition and virulence. Catalyzes the conversion of 3-dehydroshikimate to 3,4-dihydroxybenzoate (3,4-DHBA). In Bacillus anthracis, this protein is 3-dehydroshikimate dehydratase.